Consider the following 214-residue polypeptide: Cytolysin tenebrosin-B (214 aa).

A signal peptide spans 1-19 (MNRLIIVFIVVTMICAATA). The propeptide occupies 20 to 35 (LSTKRRINKEEKDEKR). A plays an important role in the hemolytic activity region spans residues 38 to 47 (AVAGAVIEGA). The tract at residues 46–65 (GATLTFNVLQTVLKALGDIS) is N-terminal region. Residues Ser89, Val122, Ser140, Pro142, Tyr168, Tyr172, and Tyr173 each coordinate phosphocholine. The segment at 140–155 (SIPFDYNLYSNWWNVK) is trp-rich region, which is important for the binding to lipid membrane. The Cell attachment site, crucial for protein stability signature appears at 179–181 (RGD).

Belongs to the actinoporin family. Sea anemone subfamily. Octamer or nonamer in membranes. Monomer in the soluble state.

The protein localises to the secreted. It localises to the nematocyst. Its subcellular location is the target cell membrane. Pore-forming protein that forms cations-selective hydrophilic pores of around 1 nm and causes cardiac stimulation and cytolysis. Pore formation is a multi-step process that involves specific recognition of membrane sphingomyelin (but neither cholesterol nor phosphatidylcholine) using aromatic rich region and adjacent phosphocholine (POC) binding site, firm binding to the membrane (mainly driven by hydrophobic interactions) accompanied by the transfer of the N-terminal region to the lipid-water interface and finally pore formation after oligomerization of monomers. The protein is Cytolysin tenebrosin-B of Actinia tenebrosa (Australian red waratah sea anemone).